Reading from the N-terminus, the 178-residue chain is Large ribosomal subunit protein uL6 (178 aa).

Belongs to the universal ribosomal protein uL6 family. As to quaternary structure, part of the 50S ribosomal subunit.

Its function is as follows. This protein binds to the 23S rRNA, and is important in its secondary structure. It is located near the subunit interface in the base of the L7/L12 stalk, and near the tRNA binding site of the peptidyltransferase center. The protein is Large ribosomal subunit protein uL6 of Levilactobacillus brevis (strain ATCC 367 / BCRC 12310 / CIP 105137 / JCM 1170 / LMG 11437 / NCIMB 947 / NCTC 947) (Lactobacillus brevis).